A 349-amino-acid chain; its full sequence is MATATLTIDLDAIAANWRALDQMTASDCQTGAVVKADSYGLGAAKVAHALARAGARRFFVATCEEGADVRRALGSGPQICVFSGHMEGDTALIRDFDLTPMLNSIDQLTRHFEALGGQPFGLQLDSGMNRLGLEPGEWEAVAGFALEAGPELLMSHLACSDDPDHPMNAEQLGAFRAMTDGTGVPRSLSATGGILLGPAWHFELTRPGIGLYGGRPFEEARPVVRLSLPVIQVREVEIGEPVGYSNTWTAEHTSTIATVAAGYADGLPRTLSSRATLYAGRVPCPLVGRVSMDLITVDVSHLPEVPETLDILGPHQTPDDLADTAGTIGYEILTSLGRRYQRRYGALAA.

Lys-35 functions as the Proton acceptor; specific for D-alanine in the catalytic mechanism. N6-(pyridoxal phosphate)lysine is present on Lys-35. Arg-130 contributes to the substrate binding site. Tyr-244 serves as the catalytic Proton acceptor; specific for L-alanine. Met-292 contributes to the substrate binding site.

It belongs to the alanine racemase family. Pyridoxal 5'-phosphate is required as a cofactor.

The enzyme catalyses L-alanine = D-alanine. It functions in the pathway amino-acid biosynthesis; D-alanine biosynthesis; D-alanine from L-alanine: step 1/1. Its function is as follows. Catalyzes the interconversion of L-alanine and D-alanine. May also act on other amino acids. In Cereibacter sphaeroides (strain KD131 / KCTC 12085) (Rhodobacter sphaeroides), this protein is Alanine racemase (alr).